A 493-amino-acid chain; its full sequence is Dihydro-heme d1 dehydrogenase (493 aa).

Residues 1–18 (MRLIGLALGLLLGALAQA) form the signal peptide. The Cytochrome c domain occupies 19–96 (GEAPGEALYR…ALVAYLYQAP (78 aa)). Cysteine 31, cysteine 34, histidine 35, arginine 68, and methionine 73 together coordinate heme c. Residues 114–468 (PHPLATLPSR…YDAHSLEEVK (355 aa)) are D1-heme domain. Positions 165, 167, 169, 182, 207, 208, 341, 390, and 435 each coordinate heme d1. Residue arginine 182 coordinates heme c.

Belongs to the cytochrome c family. Monomer. Heme c is required as a cofactor.

It localises to the periplasm. The enzyme catalyses dihydro-heme d1 + A = heme d1 + AH2. Its pathway is porphyrin-containing compound metabolism. Involved in heme d1 biosynthesis. Catalyzes the introduction of a double bond into the propionate side chain of pyrrole ring D of dihydro-heme d1, therefore converting dihydro-heme d1 to heme d1. This chain is Dihydro-heme d1 dehydrogenase, found in Pseudomonas aeruginosa (strain ATCC 15692 / DSM 22644 / CIP 104116 / JCM 14847 / LMG 12228 / 1C / PRS 101 / PAO1).